The following is a 93-amino-acid chain: Small ribosomal subunit protein uS19 (93 aa).

The protein belongs to the universal ribosomal protein uS19 family.

Its function is as follows. Protein S19 forms a complex with S13 that binds strongly to the 16S ribosomal RNA. This is Small ribosomal subunit protein uS19 from Leifsonia xyli subsp. xyli (strain CTCB07).